A 673-amino-acid polypeptide reads, in one-letter code: Pesticin receptor (673 aa).

An N-terminal signal peptide occupies residues 1 to 22 (MKMTRLYPLALGGLLLPAIANA). The TonB box motif lies at 30–37 (STLEVTAS). One can recognise a TBDR plug domain in the interval 41 to 155 (SRSASANNVS…QGGIINIVTQ (115 aa)). The 513-residue stretch at 160–672 (TPRGYIEGGV…TVGINTRIDF (513 aa)) folds into the TBDR beta-barrel domain. Positions 657-673 (QVNMGRTVGINTRIDFF) match the TonB C-terminal box motif.

It belongs to the TonB-dependent receptor family.

It localises to the cell outer membrane. Its function is as follows. Receptor for the bacteriocin pesticin and for the siderophore yersiniabactin. The chain is Pesticin receptor (fyuA) from Yersinia enterocolitica.